The following is a 279-amino-acid chain: Tryptophan 2,3-dioxygenase (279 aa).

Substrate-binding positions include 48–52 (FIVIH), Y110, and R114. H237 serves as a coordination point for heme. Substrate is bound at residue T251.

This sequence belongs to the tryptophan 2,3-dioxygenase family. As to quaternary structure, homotetramer. Requires heme as cofactor.

The enzyme catalyses L-tryptophan + O2 = N-formyl-L-kynurenine. It functions in the pathway amino-acid degradation; L-tryptophan degradation via kynurenine pathway; L-kynurenine from L-tryptophan: step 1/2. Functionally, heme-dependent dioxygenase that catalyzes the oxidative cleavage of the L-tryptophan (L-Trp) pyrrole ring and converts L-tryptophan to N-formyl-L-kynurenine. Catalyzes the oxidative cleavage of the indole moiety. The sequence is that of Tryptophan 2,3-dioxygenase from Bacillus anthracis.